We begin with the raw amino-acid sequence, 82 residues long: ATP synthase subunit c (82 aa).

The next 2 membrane-spanning stretches (helical) occupy residues 7-27 and 53-73; these read FVALAAGLIIGLGAVGACIGI and FLLAGLIDAAFLIGVGIAMMF.

The protein belongs to the ATPase C chain family. F-type ATPases have 2 components, F(1) - the catalytic core - and F(0) - the membrane proton channel. F(1) has five subunits: alpha(3), beta(3), gamma(1), delta(1), epsilon(1). F(0) has three main subunits: a(1), b(2) and c(10-14). The alpha and beta chains form an alternating ring which encloses part of the gamma chain. F(1) is attached to F(0) by a central stalk formed by the gamma and epsilon chains, while a peripheral stalk is formed by the delta and b chains.

Its subcellular location is the cell inner membrane. Its function is as follows. F(1)F(0) ATP synthase produces ATP from ADP in the presence of a proton or sodium gradient. F-type ATPases consist of two structural domains, F(1) containing the extramembraneous catalytic core and F(0) containing the membrane proton channel, linked together by a central stalk and a peripheral stalk. During catalysis, ATP synthesis in the catalytic domain of F(1) is coupled via a rotary mechanism of the central stalk subunits to proton translocation. Key component of the F(0) channel; it plays a direct role in translocation across the membrane. A homomeric c-ring of between 10-14 subunits forms the central stalk rotor element with the F(1) delta and epsilon subunits. This chain is ATP synthase subunit c, found in Polaromonas sp. (strain JS666 / ATCC BAA-500).